A 310-amino-acid chain; its full sequence is Homoserine kinase (310 aa).

ATP is bound at residue 91 to 101; that stretch reads PIGSGLGSSAC.

The protein belongs to the GHMP kinase family. Homoserine kinase subfamily.

The protein resides in the cytoplasm. The catalysed reaction is L-homoserine + ATP = O-phospho-L-homoserine + ADP + H(+). It functions in the pathway amino-acid biosynthesis; L-threonine biosynthesis; L-threonine from L-aspartate: step 4/5. Functionally, catalyzes the ATP-dependent phosphorylation of L-homoserine to L-homoserine phosphate. The chain is Homoserine kinase from Escherichia coli (strain SE11).